The chain runs to 173 residues: Probable chemoreceptor glutamine deamidase CheD (173 aa).

This sequence belongs to the CheD family.

The catalysed reaction is L-glutaminyl-[protein] + H2O = L-glutamyl-[protein] + NH4(+). Its function is as follows. Probably deamidates glutamine residues to glutamate on methyl-accepting chemotaxis receptors (MCPs), playing an important role in chemotaxis. The chain is Probable chemoreceptor glutamine deamidase CheD from Haloarcula marismortui (strain ATCC 43049 / DSM 3752 / JCM 8966 / VKM B-1809) (Halobacterium marismortui).